Consider the following 83-residue polypeptide: Exodeoxyribonuclease 7 small subunit (83 aa).

The protein belongs to the XseB family. Heterooligomer composed of large and small subunits.

The protein localises to the cytoplasm. The enzyme catalyses Exonucleolytic cleavage in either 5'- to 3'- or 3'- to 5'-direction to yield nucleoside 5'-phosphates.. Functionally, bidirectionally degrades single-stranded DNA into large acid-insoluble oligonucleotides, which are then degraded further into small acid-soluble oligonucleotides. In Nitrobacter hamburgensis (strain DSM 10229 / NCIMB 13809 / X14), this protein is Exodeoxyribonuclease 7 small subunit.